Here is a 166-residue protein sequence, read N- to C-terminus: Large ribosomal subunit protein uL10 (166 aa).

Belongs to the universal ribosomal protein uL10 family. In terms of assembly, part of the ribosomal stalk of the 50S ribosomal subunit. The N-terminus interacts with L11 and the large rRNA to form the base of the stalk. The C-terminus forms an elongated spine to which L12 dimers bind in a sequential fashion forming a multimeric L10(L12)X complex.

Forms part of the ribosomal stalk, playing a central role in the interaction of the ribosome with GTP-bound translation factors. In Staphylococcus haemolyticus (strain JCSC1435), this protein is Large ribosomal subunit protein uL10.